The following is a 299-amino-acid chain: tRNA pseudouridine synthase B (299 aa).

D47 serves as the catalytic Nucleophile.

Belongs to the pseudouridine synthase TruB family. Type 1 subfamily.

It carries out the reaction uridine(55) in tRNA = pseudouridine(55) in tRNA. Functionally, responsible for synthesis of pseudouridine from uracil-55 in the psi GC loop of transfer RNAs. In Dechloromonas aromatica (strain RCB), this protein is tRNA pseudouridine synthase B.